Here is a 146-residue protein sequence, read N- to C-terminus: Hemoglobin subunit beta (146 aa).

Val1 is modified (N-acetylvaline). Positions 2 to 146 constitute a Globin domain; that stretch reads HLTDAEKALV…VATALAHKYH (145 aa). Thr12 carries the phosphothreonine modification. At Ser44 the chain carries Phosphoserine. Lys59 is subject to N6-acetyllysine. His63 contacts heme b. Residue Lys82 is modified to N6-acetyllysine. Heme b is bound at residue His92. At Cys93 the chain carries S-nitrosocysteine. Position 144 is an N6-acetyllysine (Lys144).

This sequence belongs to the globin family. In terms of assembly, heterotetramer of two alpha chains and two beta chains. As to expression, red blood cells.

Its function is as follows. Involved in oxygen transport from the lung to the various peripheral tissues. This chain is Hemoglobin subunit beta, found in Peromyscus crinitus (Canyon mouse).